The sequence spans 477 residues: Adenosylhomocysteinase (477 aa).

Residues Thr-63, Asp-142, and Glu-202 each contribute to the substrate site. NAD(+) is bound at residue 203-205 (TTT). Residues Lys-232 and Asp-236 each contribute to the substrate site. NAD(+)-binding positions include Asn-237, 266 to 271 (GYGDVG), Glu-289, Asn-324, 345 to 347 (IGH), and Asn-390.

This sequence belongs to the adenosylhomocysteinase family. Requires NAD(+) as cofactor.

Its subcellular location is the cytoplasm. The catalysed reaction is S-adenosyl-L-homocysteine + H2O = L-homocysteine + adenosine. The protein operates within amino-acid biosynthesis; L-homocysteine biosynthesis; L-homocysteine from S-adenosyl-L-homocysteine: step 1/1. May play a key role in the regulation of the intracellular concentration of adenosylhomocysteine. This chain is Adenosylhomocysteinase, found in Methylibium petroleiphilum (strain ATCC BAA-1232 / LMG 22953 / PM1).